The sequence spans 201 residues: Lymphocyte antigen 6 complex locus protein G5b (201 aa).

Residues 1–18 (MKVHMLVGVLVMVGFTVG) form the signal peptide. Residues 26 to 118 (RTCHFCLVED…SPQLQSSLPE (93 aa)) enclose the UPAR/Ly6 domain. Cystine bridges form between Cys-28–Cys-55, Cys-31–Cys-40, Cys-47–Cys-73, Cys-81–Cys-98, and Cys-99–Cys-104. 2 N-linked (GlcNAc...) asparagine glycosylation sites follow: Asn-141 and Asn-183.

As to quaternary structure, forms oligomer. Post-translationally, N-glycosylated.

Its subcellular location is the secreted. In Homo sapiens (Human), this protein is Lymphocyte antigen 6 complex locus protein G5b (LY6G5B).